A 139-amino-acid chain; its full sequence is ATP synthase epsilon chain (139 aa).

Belongs to the ATPase epsilon chain family. As to quaternary structure, F-type ATPases have 2 components, CF(1) - the catalytic core - and CF(0) - the membrane proton channel. CF(1) has five subunits: alpha(3), beta(3), gamma(1), delta(1), epsilon(1). CF(0) has three main subunits: a, b and c.

It is found in the cell inner membrane. Produces ATP from ADP in the presence of a proton gradient across the membrane. This is ATP synthase epsilon chain from Pseudomonas putida (strain W619).